Consider the following 345-residue polypeptide: Opioid-binding protein/cell adhesion molecule (345 aa).

The signal sequence occupies residues 1–27; that stretch reads MGVCGYLFLPWKCLVVVSLRLLFLVPT. 3 consecutive Ig-like C2-type domains span residues 39–126, 136–219, and 223–310; these read PKAM…PKTS, PQIM…VKIT, and PPYI…ASIT. Residues N44, N70, and N140 are each glycosylated (N-linked (GlcNAc...) asparagine). C57 and C115 are disulfide-bonded. 2 disulfides stabilise this stretch: C157–C202 and C244–C296. Residues N285, N293, and N306 are each glycosylated (N-linked (GlcNAc...) asparagine). N322 carries the GPI-anchor amidated asparagine lipid modification. A propeptide spans 323–345 (removed in mature form); sequence SASRALACLWLSGTFFAHFFIKF.

Belongs to the immunoglobulin superfamily. IgLON family.

Its subcellular location is the cell membrane. Its function is as follows. Binds opioids in the presence of acidic lipids; probably involved in cell contact. The chain is Opioid-binding protein/cell adhesion molecule (Opcml) from Rattus norvegicus (Rat).